The primary structure comprises 166 residues: Small ribosomal subunit protein uS5 (166 aa).

Residues Tyr-12–Val-75 form the S5 DRBM domain.

The protein belongs to the universal ribosomal protein uS5 family. Part of the 30S ribosomal subunit. Contacts proteins S4 and S8.

Its function is as follows. With S4 and S12 plays an important role in translational accuracy. Located at the back of the 30S subunit body where it stabilizes the conformation of the head with respect to the body. This Pseudomonas syringae pv. tomato (strain ATCC BAA-871 / DC3000) protein is Small ribosomal subunit protein uS5.